A 272-amino-acid polypeptide reads, in one-letter code: Ribosomal RNA small subunit methyltransferase A (272 aa).

S-adenosyl-L-methionine contacts are provided by asparagine 18, leucine 20, glycine 45, glutamate 66, aspartate 91, and asparagine 113.

It belongs to the class I-like SAM-binding methyltransferase superfamily. rRNA adenine N(6)-methyltransferase family. RsmA subfamily.

It localises to the cytoplasm. The catalysed reaction is adenosine(1518)/adenosine(1519) in 16S rRNA + 4 S-adenosyl-L-methionine = N(6)-dimethyladenosine(1518)/N(6)-dimethyladenosine(1519) in 16S rRNA + 4 S-adenosyl-L-homocysteine + 4 H(+). Its function is as follows. Specifically dimethylates two adjacent adenosines (A1518 and A1519) in the loop of a conserved hairpin near the 3'-end of 16S rRNA in the 30S particle. May play a critical role in biogenesis of 30S subunits. The protein is Ribosomal RNA small subunit methyltransferase A of Proteus mirabilis (strain HI4320).